The following is a 425-amino-acid chain: Histidine--tRNA ligase (425 aa).

This sequence belongs to the class-II aminoacyl-tRNA synthetase family. As to quaternary structure, homodimer.

It is found in the cytoplasm. The catalysed reaction is tRNA(His) + L-histidine + ATP = L-histidyl-tRNA(His) + AMP + diphosphate + H(+). This is Histidine--tRNA ligase from Shewanella sp. (strain MR-4).